A 694-amino-acid chain; its full sequence is Polyphosphate kinase (694 aa).

ATP is bound at residue N45. Mg(2+) contacts are provided by R367 and R397. H427 acts as the Phosphohistidine intermediate in catalysis. The ATP site is built by Y460, R553, and H580.

The protein belongs to the polyphosphate kinase 1 (PPK1) family. The cofactor is Mg(2+). An intermediate of this reaction is the autophosphorylated ppk in which a phosphate is covalently linked to a histidine residue through a N-P bond.

It carries out the reaction [phosphate](n) + ATP = [phosphate](n+1) + ADP. Its function is as follows. Catalyzes the reversible transfer of the terminal phosphate of ATP to form a long-chain polyphosphate (polyP). In Campylobacter jejuni subsp. doylei (strain ATCC BAA-1458 / RM4099 / 269.97), this protein is Polyphosphate kinase.